The sequence spans 178 residues: Fatty-acid and retinol-binding protein 1 (178 aa).

The N-terminal stretch at 1 to 16 is a signal peptide; that stretch reads MYHRLILLALIGTTMA. 2 coiled-coil regions span residues 67 to 89 and 130 to 153; these read DAALEALKAKSDNLYKNAVELRN and KQAARDIIAKYQALSEETKEELKV.

The protein belongs to the fatty-acid and retinol-binding protein (FARBP) family. Post-translationally, not glycosylated.

The protein resides in the secreted. Its function is as follows. Binds retinol and different fatty acids. The polypeptide is Fatty-acid and retinol-binding protein 1 (Wuchereria bancrofti).